The primary structure comprises 460 residues: C4-dicarboxylate transport protein (460 aa).

8 helical membrane passes run 21–38 (LYFQ…IGHF), 53–75 (FIKL…GIAG), 88–110 (YALL…VVNV), 153–175 (IVGA…FGFA), 196–218 (VMFN…AMAF), 231–253 (LGQL…LGSI), 301–323 (VVGL…YLTM), and 363–385 (FIVL…ALIL). The tract at residues 438-460 (PEDDLGVAEGPTPANAVNTTKTV) is disordered.

It belongs to the dicarboxylate/amino acid:cation symporter (DAACS) (TC 2.A.23) family.

The protein resides in the cell inner membrane. Functionally, responsible for the transport of dicarboxylates such as succinate, fumarate, and malate from the periplasm across the membrane. The sequence is that of C4-dicarboxylate transport protein from Pseudomonas syringae pv. tomato (strain ATCC BAA-871 / DC3000).